Consider the following 328-residue polypeptide: 4-hydroxy-3-methylbut-2-enyl diphosphate reductase (328 aa).

Cys-13 serves as a coordination point for [4Fe-4S] cluster. (2E)-4-hydroxy-3-methylbut-2-enyl diphosphate is bound by residues His-41 and His-75. The dimethylallyl diphosphate site is built by His-41 and His-75. Residues His-41 and His-75 each coordinate isopentenyl diphosphate. Residue Cys-97 participates in [4Fe-4S] cluster binding. His-125 contributes to the (2E)-4-hydroxy-3-methylbut-2-enyl diphosphate binding site. His-125 contributes to the dimethylallyl diphosphate binding site. His-125 contacts isopentenyl diphosphate. The active-site Proton donor is the Glu-127. Thr-168 contacts (2E)-4-hydroxy-3-methylbut-2-enyl diphosphate. Residue Cys-225 participates in [4Fe-4S] cluster binding. Ser-253, Ser-254, Asn-255, and Ser-302 together coordinate (2E)-4-hydroxy-3-methylbut-2-enyl diphosphate. Positions 253, 254, 255, and 302 each coordinate dimethylallyl diphosphate. Isopentenyl diphosphate is bound by residues Ser-253, Ser-254, Asn-255, and Ser-302.

This sequence belongs to the IspH family. Requires [4Fe-4S] cluster as cofactor.

It carries out the reaction isopentenyl diphosphate + 2 oxidized [2Fe-2S]-[ferredoxin] + H2O = (2E)-4-hydroxy-3-methylbut-2-enyl diphosphate + 2 reduced [2Fe-2S]-[ferredoxin] + 2 H(+). It catalyses the reaction dimethylallyl diphosphate + 2 oxidized [2Fe-2S]-[ferredoxin] + H2O = (2E)-4-hydroxy-3-methylbut-2-enyl diphosphate + 2 reduced [2Fe-2S]-[ferredoxin] + 2 H(+). The protein operates within isoprenoid biosynthesis; dimethylallyl diphosphate biosynthesis; dimethylallyl diphosphate from (2E)-4-hydroxy-3-methylbutenyl diphosphate: step 1/1. It participates in isoprenoid biosynthesis; isopentenyl diphosphate biosynthesis via DXP pathway; isopentenyl diphosphate from 1-deoxy-D-xylulose 5-phosphate: step 6/6. In terms of biological role, catalyzes the conversion of 1-hydroxy-2-methyl-2-(E)-butenyl 4-diphosphate (HMBPP) into a mixture of isopentenyl diphosphate (IPP) and dimethylallyl diphosphate (DMAPP). Acts in the terminal step of the DOXP/MEP pathway for isoprenoid precursor biosynthesis. This is 4-hydroxy-3-methylbut-2-enyl diphosphate reductase from Chlorobium chlorochromatii (strain CaD3).